A 150-amino-acid polypeptide reads, in one-letter code: Macrodomain Ter protein (150 aa).

This sequence belongs to the MatP family. Homodimer.

Its subcellular location is the cytoplasm. In terms of biological role, required for spatial organization of the terminus region of the chromosome (Ter macrodomain) during the cell cycle. Prevents early segregation of duplicated Ter macrodomains during cell division. Binds specifically to matS, which is a 13 bp signature motif repeated within the Ter macrodomain. This Escherichia coli O8 (strain IAI1) protein is Macrodomain Ter protein.